A 454-amino-acid polypeptide reads, in one-letter code: T-box protein VegT (454 aa).

The T-box DNA-binding region spans 57–230; it reads LWSQFHQEGT…HNPFAKGFRE (174 aa). Basic and acidic residues predominate over residues 229–241; that stretch reads REQERSHKRDDVL. 2 disordered regions span residues 229–274 and 295–358; these read REQE…ATRV and ANQG…VPDS. A compositionally biased stretch (polar residues) spans 308–325; it reads GVNQEQQVPTSSLNFYNK.

In terms of assembly, forms a repression complex on the promoters of the nodal/nr1 and siamois genes with the maternal factors tcf7l1/tcf3 and pouf5.1/oct-25. Interacts (via C-terminus) with tcf7l1/tcf3 (via N-terminus). Also interacts with the other POU-domain transcription factors pou5f1.2/oct-91 and pou5f1.3/oct-60.

It is found in the nucleus. Transcription factor required for both mesoderm and endoderm formation in the embryo; signaling determinants and concentration levels may determine which germ layer is formed. Acts together with beta-catenin to activate genes that are responsible for mesoderm induction including wnt-8, eomes t/bra, siamois, mix1 and sox17. Directly binds to promoter DNA. Patterns the mesoderm along the dorsoventral and posterior axis. Activates siamois gene transcription when alone or in combination with beta-catenin, but inhibits siamois transcription in combination with pou5f1.1/oct-25. In Xenopus borealis (Kenyan clawed frog), this protein is T-box protein VegT.